A 463-amino-acid polypeptide reads, in one-letter code: NADH-ubiquinone oxidoreductase chain 4 (463 aa).

Transmembrane regions (helical) follow at residues Leu24 to Asn44, Thr62 to Ser82, Ile98 to Ile118, Leu119 to Gly139, Phe151 to Ile171, Trp198 to Leu218, Ile232 to Phe252, Leu260 to Val280, Leu285 to Phe305, Trp310 to Phe330, Leu353 to Pro373, Val404 to Thr424, and Leu442 to Leu462.

This sequence belongs to the complex I subunit 4 family.

It is found in the mitochondrion membrane. It catalyses the reaction a ubiquinone + NADH + 5 H(+)(in) = a ubiquinol + NAD(+) + 4 H(+)(out). Core subunit of the mitochondrial membrane respiratory chain NADH dehydrogenase (Complex I) that is believed to belong to the minimal assembly required for catalysis. Complex I functions in the transfer of electrons from NADH to the respiratory chain. The immediate electron acceptor for the enzyme is believed to be ubiquinone. The chain is NADH-ubiquinone oxidoreductase chain 4 (ND4) from Strongylocentrotus purpuratus (Purple sea urchin).